A 957-amino-acid polypeptide reads, in one-letter code: Protein CRT10 (957 aa).

The tract at residues 695 to 719 (NSTEEDDVNSDPENEESGSSLTSFQ) is disordered. Positions 697 to 710 (TEEDDVNSDPENEE) are enriched in acidic residues. Ser-704 is subject to Phosphoserine.

As to quaternary structure, component of a cullin-RING ligase (CRL) composed of 4 subunits: the RING protein HRT1, the cullin RTT101, a linker protein MMS1, and the substrate receptor CRT10. Interacts with MMS1.

Substrate targeting component of a cullin-RING-based E3 ubiquitin-protein ligase complex RTT101(MMS1-CRT10). RTT101(MMS1-CRT10) may regulate nucleotide synthesis through transcriptional regulation of RNR genes encoding ribonucleotide reductases. The polypeptide is Protein CRT10 (CRT10) (Saccharomyces cerevisiae (strain ATCC 204508 / S288c) (Baker's yeast)).